We begin with the raw amino-acid sequence, 207 residues long: Ras-related protein Rab-8A (207 aa).

10 residues coordinate GTP: S17, G18, V19, G20, K21, T22, C23, S35, S39, and T40. Residue T22 participates in Mg(2+) binding. 2 short sequence motifs (switch) span residues D31 to F45 and D63 to G80. The Mg(2+) site is built by T40 and D63. GTP is bound at residue G66. The residue at position 72 (T72) is a Phosphothreonine. The GTP site is built by N121, K122, D124, A152, and K153. A phosphoserine mark is found at S181 and S185. At C204 the chain carries Cysteine methyl ester. A lipid anchor (S-geranylgeranyl cysteine) is attached at C204. The propeptide at V205–L207 is removed in mature form.

Belongs to the small GTPase superfamily. Rab family. In terms of assembly, interacts (GTP-bound form) with MICALL1; regulates RAB8A association with recycling endosomes. Interacts with MICALL2; competes with RAB13 and is involved in E-cadherin endocytic recycling. Interacts (GTP-bound form) with MICAL1, MICALCL, MICAL3, EHBP1 and EHBP1L1; at least in case of MICAL1, MICALCL, MICAL3 and EHBP1L1 two molecules of RAB8A can bind to one molecule of the effector protein; ternary complexes of RAB8A, RAB13 and either MICAL1 or EHBP1L1 are possible. Interacts with EHD1. Interacts with MAP4K2 and SYTL4. Interacts with SGSM1 and SGSM3. Interacts with RABIF, RIMS2, RPH3A and RPH3A. Interacts with OPTN. Interacts with RAB3IP, RAB3IP functions as guanine exchange factor (GEF). Interacts with MYO5B. Interacts with CIMAP3. Interacts with BIRC6/bruce. Interacts with OCRL. Interacts with AHI1. Interacts with DCDC1. Interacts with LRRK2; interaction facilitates phosphorylation of Thr-72. Interacts with RAB31P, GDI1, GDI2, CHM, CHML, RABGGTA, RABGGTB, TBC1D15 and INPP5B; these interactions are dependent on Thr-72 not being phosphorylated. Interacts with RILPL1 and RILPL2; these interactions are dependent on the phosphorylation of Thr-72 by LRRK2. Interacts with DZIP1; prevents inhibition by the GDP-dissociation inhibitor GDI2. Interacts (in GDP-bound form) with RAB3IP/Rabin8, RAB3IP functions as guanine exchange factor (GEF) towards RAB8A. Interacts (in GDP-bound form) with RPGR, RPGR functions as GEF towards RAB8A. The cofactor is Mg(2+). In terms of processing, phosphorylation of Thr-72 in the switch II region by LRRK2 prevents the association of RAB regulatory proteins, including CHM, CHML and RAB GDP dissociation inhibitors GDI1 and GDI2. Phosphorylation by LRRK2 is required for localization to stressed lysosomes.

It localises to the cell membrane. It is found in the golgi apparatus. The protein resides in the endosome membrane. Its subcellular location is the recycling endosome membrane. The protein localises to the cell projection. It localises to the cilium. It is found in the cytoplasmic vesicle. The protein resides in the phagosome membrane. Its subcellular location is the cytoplasm. The protein localises to the cytoskeleton. It localises to the microtubule organizing center. It is found in the centrosome. The protein resides in the centriole. Its subcellular location is the cilium basal body. The protein localises to the midbody. It localises to the lysosome. It catalyses the reaction GTP + H2O = GDP + phosphate + H(+). Regulated by guanine nucleotide exchange factors (GEFs) such as RAB3IP/Rabin8 and RPGR which promote the exchange of bound GDP for free GTP, GTPase activating proteins (GAPs) which increase the GTP hydrolysis activity, and GDP dissociation inhibitors (GDIs) which inhibit the dissociation of the nucleotide from the GTPase. Activated in response to insulin. Its function is as follows. The small GTPases Rab are key regulators of intracellular membrane trafficking, from the formation of transport vesicles to their fusion with membranes. Rabs cycle between an inactive GDP-bound form and an active GTP-bound form that is able to recruit to membranes different sets of downstream effectors directly responsible for vesicle formation, movement, tethering and fusion. RAB8A is involved in polarized vesicular trafficking and neurotransmitter release. Together with RAB11A, RAB3IP, the exocyst complex, PARD3, PRKCI, ANXA2, CDC42 and DNMBP promotes transcytosis of PODXL to the apical membrane initiation sites (AMIS), apical surface formation and lumenogenesis. Regulates the compacted morphology of the Golgi. Together with MYO5B and RAB11A participates in epithelial cell polarization. Also involved in membrane trafficking to the cilium and ciliogenesis. Together with MICALL2, may also regulate adherens junction assembly. May play a role in insulin-induced transport to the plasma membrane of the glucose transporter GLUT4 and therefore play a role in glucose homeostasis. Involved in autophagy. Participates in the export of a subset of neosynthesized proteins through a Rab8-Rab10-Rab11-dependent endososomal export route. Targeted to and stabilized on stressed lysosomes through LRRK2 phosphorylation. Suppresses stress-induced lysosomal enlargement through EHBP1 and EHNP1L1 effector proteins. The protein is Ras-related protein Rab-8A (RAB8A) of Bos taurus (Bovine).